The chain runs to 450 residues: tRNA-2-methylthio-N(6)-dimethylallyladenosine synthase (450 aa).

The region spanning 7–127 (KRLYIKTYGC…LPELIARAHR (121 aa)) is the MTTase N-terminal domain. Positions 16, 52, 90, 165, 169, and 172 each coordinate [4Fe-4S] cluster. The Radical SAM core domain maps to 151 to 378 (QVSGVSAFLT…NQLLDEQQKA (228 aa)). A TRAM domain is found at 381–443 (ILQVGKTMPV…KMSLGGVLET (63 aa)).

Belongs to the methylthiotransferase family. MiaB subfamily. Monomer. It depends on [4Fe-4S] cluster as a cofactor.

It is found in the cytoplasm. It carries out the reaction N(6)-dimethylallyladenosine(37) in tRNA + (sulfur carrier)-SH + AH2 + 2 S-adenosyl-L-methionine = 2-methylsulfanyl-N(6)-dimethylallyladenosine(37) in tRNA + (sulfur carrier)-H + 5'-deoxyadenosine + L-methionine + A + S-adenosyl-L-homocysteine + 2 H(+). Its function is as follows. Catalyzes the methylthiolation of N6-(dimethylallyl)adenosine (i(6)A), leading to the formation of 2-methylthio-N6-(dimethylallyl)adenosine (ms(2)i(6)A) at position 37 in tRNAs that read codons beginning with uridine. This chain is tRNA-2-methylthio-N(6)-dimethylallyladenosine synthase, found in Caulobacter sp. (strain K31).